We begin with the raw amino-acid sequence, 431 residues long: CCA-adding enzyme (431 aa).

ATP contacts are provided by Ser50 and Lys53. Residues Ser50 and Lys53 each contribute to the CTP site. Mg(2+) is bound by residues Asp61, Asp63, and Asp112. ATP is bound by residues His135, Lys155, and Tyr164. CTP contacts are provided by His135, Lys155, and Tyr164.

The protein belongs to the tRNA nucleotidyltransferase/poly(A) polymerase family. Archaeal CCA-adding enzyme subfamily. In terms of assembly, homodimer. The cofactor is Mg(2+).

It catalyses the reaction a tRNA precursor + 2 CTP + ATP = a tRNA with a 3' CCA end + 3 diphosphate. The catalysed reaction is a tRNA with a 3' CCA end + 2 CTP + ATP = a tRNA with a 3' CCACCA end + 3 diphosphate. Functionally, catalyzes the addition and repair of the essential 3'-terminal CCA sequence in tRNAs without using a nucleic acid template. Adds these three nucleotides in the order of C, C, and A to the tRNA nucleotide-73, using CTP and ATP as substrates and producing inorganic pyrophosphate. tRNA 3'-terminal CCA addition is required both for tRNA processing and repair. Also involved in tRNA surveillance by mediating tandem CCA addition to generate a CCACCA at the 3' terminus of unstable tRNAs. While stable tRNAs receive only 3'-terminal CCA, unstable tRNAs are marked with CCACCA and rapidly degraded. In Thermoplasma acidophilum (strain ATCC 25905 / DSM 1728 / JCM 9062 / NBRC 15155 / AMRC-C165), this protein is CCA-adding enzyme.